Reading from the N-terminus, the 337-residue chain is Ribosomal RNA small subunit methyltransferase C (337 aa).

This sequence belongs to the methyltransferase superfamily. RsmC family. As to quaternary structure, monomer.

Its subcellular location is the cytoplasm. The catalysed reaction is guanosine(1207) in 16S rRNA + S-adenosyl-L-methionine = N(2)-methylguanosine(1207) in 16S rRNA + S-adenosyl-L-homocysteine + H(+). Its function is as follows. Specifically methylates the guanine in position 1207 of 16S rRNA in the 30S particle. The polypeptide is Ribosomal RNA small subunit methyltransferase C (Acinetobacter baumannii (strain AB307-0294)).